Here is a 110-residue protein sequence, read N- to C-terminus: Protein P2 (110 aa).

Positions 72-82 (KLPTTSGSSSA) are enriched in polar residues. Positions 72-110 (KLPTTSGSSSAGAIVPAGSNTQGQYKAPPKKGIKRKYPA) are disordered. Residues 99–110 (PPKKGIKRKYPA) show a composition bias toward basic residues.

The polypeptide is Protein P2 (Oryza sativa (Rice)).